We begin with the raw amino-acid sequence, 408 residues long: Glucose-1-phosphate adenylyltransferase (408 aa).

Residues Tyr-100, Gly-165, 180-181, and Ser-198 each bind alpha-D-glucose 1-phosphate; that span reads EK.

Belongs to the bacterial/plant glucose-1-phosphate adenylyltransferase family. As to quaternary structure, homotetramer.

It carries out the reaction alpha-D-glucose 1-phosphate + ATP + H(+) = ADP-alpha-D-glucose + diphosphate. It participates in glycan biosynthesis; glycogen biosynthesis. Its function is as follows. Involved in the biosynthesis of ADP-glucose, a building block required for the elongation reactions to produce glycogen. Catalyzes the reaction between ATP and alpha-D-glucose 1-phosphate (G1P) to produce pyrophosphate and ADP-Glc. The sequence is that of Glucose-1-phosphate adenylyltransferase from Cutibacterium acnes (strain DSM 16379 / KPA171202) (Propionibacterium acnes).